The following is a 285-amino-acid chain: Aquaporin-6 (285 aa).

Transmembrane regions (helical) follow at residues 36-56 (IFWKSIRAELIGSLVLMVFSC), 76-96 (YCFKSISAHFNPVITIAALLL), and 105-125 (ISLVLAQTLGTLSGASVCYYG). Residues 86 to 88 (NPV) carry the NPA 1 motif. N-linked (GlcNAc...) asparagine glycosylation is present at Asn128. Helical transmembrane passes span 143-163 (VSPAKGFGYEFFGTFVIILTM) and 177-197 (GDSNLLPLIFGLSVGLSSGMA). Positions 206–208 (NPM) match the NPA 2 motif. Residues 225-245 (YIYWIGPIFGCLLAVFTFDYT) traverse the membrane as a helical segment.

It belongs to the MIP/aquaporin (TC 1.A.8) family.

It localises to the cell membrane. Its function is as follows. Probable water-specific aquaporin that may modulate the water content and osmolytes during anhydrobiosis. The sequence is that of Aquaporin-6 from Milnesium tardigradum (Water bear).